Here is a 132-residue protein sequence, read N- to C-terminus: Small ribosomal subunit protein uS8 (132 aa).

This sequence belongs to the universal ribosomal protein uS8 family. As to quaternary structure, part of the 30S ribosomal subunit. Contacts proteins S5 and S12.

One of the primary rRNA binding proteins, it binds directly to 16S rRNA central domain where it helps coordinate assembly of the platform of the 30S subunit. The sequence is that of Small ribosomal subunit protein uS8 from Psychrobacter sp. (strain PRwf-1).